We begin with the raw amino-acid sequence, 402 residues long: Acetate kinase (402 aa).

A Mg(2+)-binding site is contributed by Asn7. Lys14 contacts ATP. Arg95 serves as a coordination point for substrate. Catalysis depends on Asp152, which acts as the Proton donor/acceptor. ATP contacts are provided by residues 212-216 (HLGNG), 286-288 (DMR), and 334-338 (GIGEN). Glu388 provides a ligand contact to Mg(2+).

The protein belongs to the acetokinase family. As to quaternary structure, homodimer. Mg(2+) is required as a cofactor. Mn(2+) serves as cofactor.

The protein resides in the cytoplasm. It catalyses the reaction acetate + ATP = acetyl phosphate + ADP. It participates in metabolic intermediate biosynthesis; acetyl-CoA biosynthesis; acetyl-CoA from acetate: step 1/2. Its function is as follows. Catalyzes the formation of acetyl phosphate from acetate and ATP. Can also catalyze the reverse reaction. The polypeptide is Acetate kinase (Oleidesulfovibrio alaskensis (strain ATCC BAA-1058 / DSM 17464 / G20) (Desulfovibrio alaskensis)).